Consider the following 396-residue polypeptide: Phosphoglycerate kinase (396 aa).

Residues 21–23 (DFN), Arg-36, 59–62 (HLGK), Arg-119, and Arg-156 each bind substrate. Residues Lys-206, Gly-294, Glu-325, and 352–355 (GGDS) each bind ATP.

This sequence belongs to the phosphoglycerate kinase family. In terms of assembly, monomer.

Its subcellular location is the cytoplasm. It carries out the reaction (2R)-3-phosphoglycerate + ATP = (2R)-3-phospho-glyceroyl phosphate + ADP. The protein operates within carbohydrate degradation; glycolysis; pyruvate from D-glyceraldehyde 3-phosphate: step 2/5. The protein is Phosphoglycerate kinase of Listeria monocytogenes serotype 4b (strain CLIP80459).